Reading from the N-terminus, the 842-residue chain is Probable receptor-like protein kinase At5g61350 (842 aa).

An N-terminal signal peptide occupies residues 1–27 (MGGDFRHFSSHVSLLLLFLLIVKSSSS). The Extracellular portion of the chain corresponds to 28–425 (FTPADNYLID…IGGMSSKKLA (398 aa)). N81, N125, N252, N294, N359, and N365 each carry an N-linked (GlcNAc...) asparagine glycan. The helical transmembrane segment at 426-446 (IAGIGFVMALTAFLGVVVLLV) threads the bilayer. Topologically, residues 447-842 (RWQRRPKDWQ…EMQSPSHSIP (396 aa)) are cytoplasmic. Positions 525-803 (FDENAVCGVG…GDVLWNLEYA (279 aa)) constitute a Protein kinase domain. Residues 531–539 (CGVGGFGKV) and K553 each bind ATP. D655 functions as the Proton acceptor in the catalytic mechanism.

The protein belongs to the protein kinase superfamily. Ser/Thr protein kinase family.

It is found in the membrane. The sequence is that of Probable receptor-like protein kinase At5g61350 from Arabidopsis thaliana (Mouse-ear cress).